The chain runs to 583 residues: Protein LONG AFTER FAR-RED 3 (583 aa).

The helical transmembrane segment at 7 to 27 threads the bilayer; sequence FPVMIGFVSAAVFLLISVAYL. N-linked (GlcNAc...) asparagine glycans are attached at residues N55 and N374.

Belongs to the metallo-dependent hydrolases superfamily. Expressed at low level in seedlings, roots, leaves, stems, flowers, and siliques.

It is found in the membrane. It localises to the cytoplasm. Its subcellular location is the perinuclear region. Required for phyA-controlled responses to continuous far-red light (FRc) conditions, including the inhibition of hypocotyl elongation and the regulation of XTH15/XTR7 expression. The chain is Protein LONG AFTER FAR-RED 3 from Arabidopsis thaliana (Mouse-ear cress).